A 69-amino-acid polypeptide reads, in one-letter code: U2-agatoxin-Ao1z (69 aa).

The N-terminal stretch at 1–20 is a signal peptide; it reads MRAIISLLLISAMVFSMIEA. Positions 21 to 34 are excised as a propeptide; it reads VPVEEGLQLFEGER. Cystine bridges form between cysteine 37/cysteine 53, cysteine 44/cysteine 58, and cysteine 52/cysteine 68.

Belongs to the neurotoxin 01 (U2-agtx) family. Expressed by the venom gland.

It localises to the secreted. Functionally, insect active toxin causing rapid but reversible paralysis in crickets. No activity shown in mammals. Does not show effect on mammalian voltage-gated calcium channels. The protein is U2-agatoxin-Ao1z of Agelena orientalis (Funnel-web spider).